The primary structure comprises 79 residues: uncharacterized protein (79 aa).

A compositionally biased stretch (low complexity) spans 22 to 72; that stretch reads NNNNNNNNNNNNNNNNNNNNNNNNNNNNNNNNNNNNNNNNNNNNNNNNNNN. The segment at 22-79 is disordered; that stretch reads NNNNNNNNNNNNNNNNNNNNNNNNNNNNNNNNNNNNNNNNNNNNNNNNNNNKRFFFFG.

This is an uncharacterized protein from Dictyostelium discoideum (Social amoeba).